The chain runs to 322 residues: uncharacterized protein (322 aa).

The chain crosses the membrane as a helical span at residues 299-319 (GLLLEGTIVALILLEIILALA).

Its subcellular location is the membrane. This is an uncharacterized protein from Methanocaldococcus jannaschii (strain ATCC 43067 / DSM 2661 / JAL-1 / JCM 10045 / NBRC 100440) (Methanococcus jannaschii).